Consider the following 645-residue polypeptide: Threonine--tRNA ligase (645 aa).

The 63-residue stretch at 1–63 (MEQINIQFPD…ETDGSIEIVT (63 aa)) folds into the TGS domain. A catalytic region spans residues 242–540 (DHRKIGKELE…LTEETKGAFP (299 aa)). 3 residues coordinate Zn(2+): cysteine 336, histidine 387, and histidine 517.

The protein belongs to the class-II aminoacyl-tRNA synthetase family. In terms of assembly, homodimer. Requires Zn(2+) as cofactor.

It localises to the cytoplasm. It carries out the reaction tRNA(Thr) + L-threonine + ATP = L-threonyl-tRNA(Thr) + AMP + diphosphate + H(+). In terms of biological role, catalyzes the attachment of threonine to tRNA(Thr) in a two-step reaction: L-threonine is first activated by ATP to form Thr-AMP and then transferred to the acceptor end of tRNA(Thr). Also edits incorrectly charged L-seryl-tRNA(Thr). The protein is Threonine--tRNA ligase of Staphylococcus aureus (strain bovine RF122 / ET3-1).